Here is a 181-residue protein sequence, read N- to C-terminus: Methanesulfonate monooxygenase hydroxylase subunit beta (181 aa).

The protein belongs to the bacterial ring-hydroxylating dioxygenase beta subunit family. As to quaternary structure, the MSA monooxygenase system consists of 4 proteins: the 2 subunits of the hydroxylase component (MsmA and MsmB), a ferredoxin (MsmC) and a ferredoxin reductase (MsmD). The hydroxylase component consists of a 3 alpha (MsmA) and 3 beta (MsmB) subunits.

The protein localises to the cytoplasm. It carries out the reaction methanesulfonate + NADH + O2 = sulfite + formaldehyde + NAD(+) + H2O. With respect to regulation, MSAMO is inhibited by metal chelators (such as bathophenanthroline, bathocuprione, neocuprione, alpha-alpha-dipyridil and sodium EDTA) and by sodium azide, sodium arsenate and potassium cyanide. In terms of biological role, methanesulfonate monooxygenase (MSAMO) mediates the primary degradation of methanesulfonic acid (MSA) to produce formaldehyd and inorganic sulfite by initial hydroxylation of the carbon atom prior to spontaneous cleavage of the unstable hydroxymethanesulfonic acid. MSAMO has a restricted substrate range that includes only the short-chain aliphatic sulfonates (methane- to butanesulfonate) and excludes all larger molecules, such as arylsulfonates and aromatic sulfonates. All MSAMO components are required for enzyme activity. The sequence is that of Methanesulfonate monooxygenase hydroxylase subunit beta from Methylosulfonomonas methylovora.